The primary structure comprises 166 residues: Ribosome maturation factor RimM (166 aa).

Positions Glu-90 to Trp-163 constitute a PRC barrel domain.

This sequence belongs to the RimM family. In terms of assembly, binds ribosomal protein uS19.

The protein resides in the cytoplasm. Its function is as follows. An accessory protein needed during the final step in the assembly of 30S ribosomal subunit, possibly for assembly of the head region. Essential for efficient processing of 16S rRNA. May be needed both before and after RbfA during the maturation of 16S rRNA. It has affinity for free ribosomal 30S subunits but not for 70S ribosomes. This Clostridium acetobutylicum (strain ATCC 824 / DSM 792 / JCM 1419 / IAM 19013 / LMG 5710 / NBRC 13948 / NRRL B-527 / VKM B-1787 / 2291 / W) protein is Ribosome maturation factor RimM.